The primary structure comprises 800 residues: MSEIIQDLSLEDVLGDRFGRYSKYIIQERALPDVRDGLKPVQRRILYAMYSSGNTHDKNFRKSAKTVGDVIGQYHPHGDSSVYEAMVRLSQDWKLRHVLIEMHGNNGSIDNDPPAAMRYTEAKLSLLAEELLRDINKETVSFIPNYDDTTLEPMVLPSRFPNLLVNGSTGISAGYATDIPPHNLAEVIQATLKYIDNPDITVNQLMKYIKGPDFPTGGIIQGIDGIKKAYESGKGRIIVRSKVEEETLRNGRKQLIITEIPYEVNKSSLVKRIDELRADKKVDGIVEVRDETDRTGLRIAIELKKDVNSESIKNYLYKNSDLQISYNFNMVAISDGRPKLMGIRQIIDSYLNHQIEVVANRTKFELDNAEKRMHIVEGLIKALSILDKVIELIRSSKNKRDAKENLIEVYEFTEEQAEAIVMLQLYRLTNTDIVALEGEHKELEALIKQLRHILDNHDALLNVIKEELNEIKKKFKSERLSLIEAEIEEIKIDKEVMVPSEEVILSMTRHGYIKRTSIRSFNASGVEDIGLKDGDSLLKHQEVNTQDTVLVFTNKGRYLFIPVHKLADIRWKELGQHVSQIVPIEEDEVVINVFNEKDFNTDAFYVFATQNGMIKKSTVPLFKTTRFNKPLIATKVKENDDLISVMRFEKDQLITVITNKGMSLTYNTSELSDTGLRAAGVKSINLKAEDFVVVTEGVSENDTILMATQRGSLKRISFKILQVAKRAQRGITLLKELKKNPHRIVAAHVVTGEHSQYTLYSKSNEEHGLINDIHKSEQYTNGSFIVDTDDFGEVIDMYIS.

The Topo IIA-type catalytic domain occupies 31–495; that stretch reads LPDVRDGLKP…EIEEIKIDKE (465 aa). Tyrosine 119 acts as the O-(5'-phospho-DNA)-tyrosine intermediate in catalysis.

The protein belongs to the type II topoisomerase GyrA/ParC subunit family. ParC type 2 subfamily. Heterotetramer composed of ParC and ParE.

The protein localises to the cell membrane. The catalysed reaction is ATP-dependent breakage, passage and rejoining of double-stranded DNA.. Its function is as follows. Topoisomerase IV is essential for chromosome segregation. It relaxes supercoiled DNA. Performs the decatenation events required during the replication of a circular DNA molecule. The sequence is that of DNA topoisomerase 4 subunit A from Staphylococcus aureus (strain MSSA476).